The following is a 470-amino-acid chain: Putative ankyrin repeat protein L279 (470 aa).

4 ANK repeats span residues 119 to 148 (RDDY…NPGT), 149 to 178 (NKYA…GSDK), 372 to 401 (ETQG…NVNE), and 403 to 431 (NGKP…DISL).

The polypeptide is Putative ankyrin repeat protein L279 (Acanthamoeba polyphaga (Amoeba)).